The primary structure comprises 161 residues: 2-C-methyl-D-erythritol 2,4-cyclodiphosphate synthase (161 aa).

A divalent metal cation is bound by residues Asp-9 and His-11. Residues Asp-9–His-11 and His-37–Ser-38 contribute to the 4-CDP-2-C-methyl-D-erythritol 2-phosphate site. Position 45 (His-45) interacts with a divalent metal cation. Residues Asp-59–Gly-61, Phe-64–Asp-68, Thr-135–Glu-138, and Arg-145 contribute to the 4-CDP-2-C-methyl-D-erythritol 2-phosphate site.

The protein belongs to the IspF family. As to quaternary structure, homotrimer. A divalent metal cation serves as cofactor.

The enzyme catalyses 4-CDP-2-C-methyl-D-erythritol 2-phosphate = 2-C-methyl-D-erythritol 2,4-cyclic diphosphate + CMP. It participates in isoprenoid biosynthesis; isopentenyl diphosphate biosynthesis via DXP pathway; isopentenyl diphosphate from 1-deoxy-D-xylulose 5-phosphate: step 4/6. Functionally, involved in the biosynthesis of isopentenyl diphosphate (IPP) and dimethylallyl diphosphate (DMAPP), two major building blocks of isoprenoid compounds. Catalyzes the conversion of 4-diphosphocytidyl-2-C-methyl-D-erythritol 2-phosphate (CDP-ME2P) to 2-C-methyl-D-erythritol 2,4-cyclodiphosphate (ME-CPP) with a corresponding release of cytidine 5-monophosphate (CMP). The sequence is that of 2-C-methyl-D-erythritol 2,4-cyclodiphosphate synthase from Leptospira borgpetersenii serovar Hardjo-bovis (strain JB197).